A 101-amino-acid polypeptide reads, in one-letter code: uncharacterized protein (101 aa).

Helical transmembrane passes span 3–23 (IVYE…LFLF) and 39–59 (AFLS…LIFF).

The protein resides in the membrane. This is an uncharacterized protein from Saccharomyces cerevisiae (strain ATCC 204508 / S288c) (Baker's yeast).